The sequence spans 419 residues: Tol-Pal system protein TolB (419 aa).

The N-terminal stretch at 1–19 (MCNRIISLFLLLFTGQVIA) is a signal peptide.

The protein belongs to the TolB family. In terms of assembly, the Tol-Pal system is composed of five core proteins: the inner membrane proteins TolA, TolQ and TolR, the periplasmic protein TolB and the outer membrane protein Pal. They form a network linking the inner and outer membranes and the peptidoglycan layer.

It localises to the periplasm. In terms of biological role, part of the Tol-Pal system, which plays a role in outer membrane invagination during cell division and is important for maintaining outer membrane integrity. In Legionella pneumophila (strain Paris), this protein is Tol-Pal system protein TolB.